Here is a 592-residue protein sequence, read N- to C-terminus: Cyclin-dependent kinase-like 3 (592 aa).

The 283-residue stretch at Y4–F286 folds into the Protein kinase domain. Residues V10–V18 and K33 each bind ATP. Residues N44–E50 carry the [NKR]KIAxRE motif. D125 (proton acceptor) is an active-site residue. T158 is subject to Phosphothreonine. A Phosphotyrosine modification is found at Y160. Over residues G368 to E379 the composition is skewed to basic and acidic residues. 2 disordered regions span residues G368 to N390 and R459 to I485. The segment covering S466–S477 has biased composition (polar residues).

It belongs to the protein kinase superfamily. CMGC Ser/Thr protein kinase family. CDC2/CDKX subfamily.

It localises to the cytoplasm. The enzyme catalyses L-seryl-[protein] + ATP = O-phospho-L-seryl-[protein] + ADP + H(+). It carries out the reaction L-threonyl-[protein] + ATP = O-phospho-L-threonyl-[protein] + ADP + H(+). This is Cyclin-dependent kinase-like 3 from Homo sapiens (Human).